We begin with the raw amino-acid sequence, 71 residues long: Exodeoxyribonuclease 7 small subunit (71 aa).

The protein belongs to the XseB family. Heterooligomer composed of large and small subunits.

Its subcellular location is the cytoplasm. The enzyme catalyses Exonucleolytic cleavage in either 5'- to 3'- or 3'- to 5'-direction to yield nucleoside 5'-phosphates.. Its function is as follows. Bidirectionally degrades single-stranded DNA into large acid-insoluble oligonucleotides, which are then degraded further into small acid-soluble oligonucleotides. This chain is Exodeoxyribonuclease 7 small subunit, found in Streptococcus thermophilus (strain ATCC BAA-250 / LMG 18311).